The following is a 246-amino-acid chain: Alpha-amylase inhibitor 1 (246 aa).

Residues 1 to 23 (MIMASSKLLSLALFLALLSHANS) form the signal peptide. 3 N-linked (GlcNAc...) asparagine glycosylation sites follow: N35, N88, and N163. Positions 240-246 (IVLNKIL) are excised as a propeptide.

It belongs to the leguminous lectin family. Heterodimer of chain 1 and chain 2. Post-translationally, proteolytic processing yields active form.

In terms of biological role, lectin and alpha-amylase inhibitor. Acts as a defensive protein against insects. The chain is Alpha-amylase inhibitor 1 (LLP) from Phaseolus vulgaris (Kidney bean).